A 481-amino-acid polypeptide reads, in one-letter code: UDP-glucose 6-dehydrogenase (481 aa).

NAD(+)-binding positions include 16-21 (GAGYVG), aspartate 41, lysine 46, 94-98 (VNTPT), 135-136 (ST), and glutamate 172. Residues 168 to 172 (EFLAE), 227 to 231 (KLVAN), arginine 267, and 274 to 280 (QASVGFG) each bind substrate. The active-site Nucleophile is cysteine 283. 283–286 (CFQK) lines the NAD(+) pocket. Residue 345-346 (FK) coordinates substrate. Arginine 353 is an NAD(+) binding site. Arginine 447 provides a ligand contact to substrate.

This sequence belongs to the UDP-glucose/GDP-mannose dehydrogenase family. As to expression, expressed in the vulva and in oocytes.

The catalysed reaction is UDP-alpha-D-glucose + 2 NAD(+) + H2O = UDP-alpha-D-glucuronate + 2 NADH + 3 H(+). It functions in the pathway nucleotide-sugar biosynthesis; UDP-alpha-D-glucuronate biosynthesis; UDP-alpha-D-glucuronate from UDP-alpha-D-glucose: step 1/1. Functionally, involved in the biosynthesis of glycosaminoglycans; hyaluronan, chondroitin sulfate, and heparan sulfate. This is UDP-glucose 6-dehydrogenase (sqv-4) from Caenorhabditis elegans.